Consider the following 1122-residue polypeptide: DNA polymerase (1122 aa).

Belongs to the DNA polymerase type-B family. Heterodimer with the terminal protein; this heterodimer binds to bp 9 to 18 of the genome. Forms a complex with viral pTP, DBP and hosts NFIA and POU2F1/OCT1 for initiation of replication.

It localises to the host nucleus. It catalyses the reaction DNA(n) + a 2'-deoxyribonucleoside 5'-triphosphate = DNA(n+1) + diphosphate. Its function is as follows. Eukaryotic-type DNA polymerase involved in viral genomic replication. DNA synthesis is protein primed, and acts in a strand displacement replication. Assembles in complex with viral pTP, DBP, host NFIA and host POU2F1/OCT1 on viral origin of replication. The polymerase covalently transfers dCMP onto pTP, thereby initiating complementary strand synthesis. This is DNA polymerase from Human adenovirus B serotype 7 (HAdV-7).